The following is a 99-amino-acid chain: UPF0473 protein LEUM_0559 (99 aa).

It belongs to the UPF0473 family.

The polypeptide is UPF0473 protein LEUM_0559 (Leuconostoc mesenteroides subsp. mesenteroides (strain ATCC 8293 / DSM 20343 / BCRC 11652 / CCM 1803 / JCM 6124 / NCDO 523 / NBRC 100496 / NCIMB 8023 / NCTC 12954 / NRRL B-1118 / 37Y)).